The sequence spans 192 residues: Interleukin-18 (192 aa).

Positions 1-35 (MAAEPEDNCISFVEMKFINNTLYFVAENDEDLESD) are excised as a propeptide.

The protein belongs to the IL-1 family. In terms of assembly, forms a ternary complex with ligand-binding receptor subunit IL18R1 and signaling receptor subunit IL18RAP at the plasma membrane. Mature IL18 first binds to IL18R1 forming a low affinity binary complex, which then interacts with IL18RAP to form a high affinity ternary complex that signals inside the cell. Interacts with cargo receptor TMED10; the interaction mediates the translocation from the cytoplasm into the ERGIC (endoplasmic reticulum-Golgi intermediate compartment) and thereby secretion. The pro-IL-18 precursor is processed by CASP1, CASP4 or CASP5 to yield its mature, active form. The pro-IL-18 precursor features autoinhibitory interactions between the propeptide and the post-cleavage-site region, preventing recognition by the IL18R1 receptor. Processing by CASP1, CASP4 or CASP5 induces conformational changes to generate critical receptor-binding sites. The mature form is then secreted and released in the extracellular milieu by passing through the gasdermin-D (GSDMD) pore. In contrast, cleavage by CASP3 inactivates IL18.

It localises to the cytoplasm. It is found in the cytosol. The protein resides in the secreted. Pro-inflammatory cytokine primarily involved in epithelial barrier repair, polarized T-helper 1 (Th1) cell and natural killer (NK) cell immune responses. Upon binding to IL18R1 and IL18RAP, forms a signaling ternary complex which activates NF-kappa-B, triggering synthesis of inflammatory mediators. Synergizes with IL12/interleukin-12 to induce IFNG synthesis from T-helper 1 (Th1) cells and natural killer (NK) cells. Involved in transduction of inflammation downstream of pyroptosis: its mature form is specifically released in the extracellular milieu by passing through the gasdermin-D (GSDMD) pore. The sequence is that of Interleukin-18 (IL18) from Sus scrofa (Pig).